A 692-amino-acid chain; its full sequence is Elongation factor G (692 aa).

Positions 8–282 constitute a tr-type G domain; the sequence is PNTRNIGIMA…NVVAYLPSPV (275 aa). GTP-binding positions include 17–24, 81–85, and 135–138; these read AHIDAGKT, DTPGH, and NKMD.

It belongs to the TRAFAC class translation factor GTPase superfamily. Classic translation factor GTPase family. EF-G/EF-2 subfamily.

The protein resides in the cytoplasm. Its function is as follows. Catalyzes the GTP-dependent ribosomal translocation step during translation elongation. During this step, the ribosome changes from the pre-translocational (PRE) to the post-translocational (POST) state as the newly formed A-site-bound peptidyl-tRNA and P-site-bound deacylated tRNA move to the P and E sites, respectively. Catalyzes the coordinated movement of the two tRNA molecules, the mRNA and conformational changes in the ribosome. This Brevibacillus brevis (strain 47 / JCM 6285 / NBRC 100599) protein is Elongation factor G.